The following is a 173-amino-acid chain: MEIGQYQPNLEGDGLRIGIVQSRFNEPVCNGLADACVEELERLGVSGEDVLLVTVPGALEIPLALQKLAESNQFDALIALGAVIRGETYHFELVSNESGAGITRIALDFNTPIANAVLTTETDEQAIARMTEKGRDAARVAVEMANLTMTLDQLSDDEEDEEDEDDEDEEERA.

5-amino-6-(D-ribitylamino)uracil contacts are provided by residues Phe24, 58-60 (ALE), and 82-84 (AVI). Residue 87 to 88 (ET) coordinates (2S)-2-hydroxy-3-oxobutyl phosphate. The Proton donor role is filled by His90. Residue Asn115 participates in 5-amino-6-(D-ribitylamino)uracil binding. Arg129 contributes to the (2S)-2-hydroxy-3-oxobutyl phosphate binding site. The tract at residues 150–173 (TLDQLSDDEEDEEDEDDEDEEERA) is disordered. Positions 154–173 (LSDDEEDEEDEDDEDEEERA) are enriched in acidic residues.

This sequence belongs to the DMRL synthase family.

The enzyme catalyses (2S)-2-hydroxy-3-oxobutyl phosphate + 5-amino-6-(D-ribitylamino)uracil = 6,7-dimethyl-8-(1-D-ribityl)lumazine + phosphate + 2 H2O + H(+). Its pathway is cofactor biosynthesis; riboflavin biosynthesis; riboflavin from 2-hydroxy-3-oxobutyl phosphate and 5-amino-6-(D-ribitylamino)uracil: step 1/2. Functionally, catalyzes the formation of 6,7-dimethyl-8-ribityllumazine by condensation of 5-amino-6-(D-ribitylamino)uracil with 3,4-dihydroxy-2-butanone 4-phosphate. This is the penultimate step in the biosynthesis of riboflavin. This Burkholderia mallei (strain NCTC 10247) protein is 6,7-dimethyl-8-ribityllumazine synthase.